The sequence spans 94 residues: Pyrimidine/purine nucleoside phosphorylase (94 aa).

Belongs to the nucleoside phosphorylase PpnP family.

It carries out the reaction a purine D-ribonucleoside + phosphate = a purine nucleobase + alpha-D-ribose 1-phosphate. The catalysed reaction is adenosine + phosphate = alpha-D-ribose 1-phosphate + adenine. The enzyme catalyses cytidine + phosphate = cytosine + alpha-D-ribose 1-phosphate. It catalyses the reaction guanosine + phosphate = alpha-D-ribose 1-phosphate + guanine. It carries out the reaction inosine + phosphate = alpha-D-ribose 1-phosphate + hypoxanthine. The catalysed reaction is thymidine + phosphate = 2-deoxy-alpha-D-ribose 1-phosphate + thymine. The enzyme catalyses uridine + phosphate = alpha-D-ribose 1-phosphate + uracil. It catalyses the reaction xanthosine + phosphate = alpha-D-ribose 1-phosphate + xanthine. Functionally, catalyzes the phosphorolysis of diverse nucleosides, yielding D-ribose 1-phosphate and the respective free bases. Can use uridine, adenosine, guanosine, cytidine, thymidine, inosine and xanthosine as substrates. Also catalyzes the reverse reactions. The sequence is that of Pyrimidine/purine nucleoside phosphorylase from Salmonella heidelberg (strain SL476).